The primary structure comprises 757 residues: MDNLSFHDGNIFNLLHTRSQDPSHEVDQRMQFHSSLVRRLSQEQELEGHQGCVNALAWNSNGSLLISGSDDLRINIWNYSSRKLLHSIDTGHTANIFCTKFVPETSDELVVSGAGDAEVRLFNTSRLSGRAEDDNAIIPSALYQCHTRRVKKLAVEPGNPNVVWSASEDGTLRQHDFRESTSCPPAGTAHQECRSVLLDLRSGAKRALADPPKQTLSLKSCDISATRPHLLLVGGSDAFARLYDRRMLPPLASSRKRMPPPPCVNYFCPMHLSERGRTNLHLTHVTFSPNGEEVLLSYSGEHVYLMNVNNGICSTGIMQYTPGDVDNLFSFSNNLHDVESPPQVSTTPQNGFHRSSNAATVKKCTELVEIAKWSLEEGTDVFYAIEAANEVLDAHSNDIESALRHECLCTRAALLLKRKWKNDAHMAVRDCHNARRIDASSFKAHYYMSEALQQLGKCKEALDFATAAQHMNPSDADIVAKVESIKRDLQAAGAEKNEETGAGTTRVLSLSDILYRSEANSDSSHDMSRSEREDSDYDEELELDIQTSLSDDEGRDTDSNSMRGSLNLRIHRVGDDKPMENTVDNASSGTASSSQNDRTSYQPEGAIDMKRRYVGHCNVGTDIKQASFLGQRGEYIASGSDDGRWFIWEKQTGRLMKVLVGDESVLNCIQCHPFDSVVATSGIDNTIKIWSPTASVPSIVAGGSAGPATANVVEVMESNQQKLSRNRENPLSVELMQRFRMQEFAEGNFHPFECTQS.

WD repeat units follow at residues 6–43 (FHDGNIFNLLHTRSQDPSHEVDQRMQFHSSLVRRLSQE), 48–87 (GHQGCVNALAWNSNGSLLISGSDDLRINIWNYSSRKLLHS), 91–132 (GHTA…GRAE), 145–185 (CHTR…SCPP), 213–253 (KQTL…PLAS), and 277–316 (RTNLHLTHVTFSPNGEEVLLSYSGEHVYLMNVNNGICSTG). The Nuclear localization signal signature appears at 245–257 (RRMLPPLASSRKR). One copy of the TPR repeat lies at 442–475 (FKAHYYMSEALQQLGKCKEALDFATAAQHMNPSD). Positions 519–601 (ANSDSSHDMS…SSSQNDRTSY (83 aa)) are disordered. Over residues 523–532 (SSHDMSRSER) the composition is skewed to basic and acidic residues. The segment covering 533-543 (EDSDYDEELEL) has biased composition (acidic residues). The segment covering 582 to 601 (TVDNASSGTASSSQNDRTSY) has biased composition (polar residues). WD repeat units lie at residues 618 to 658 (NVGT…LMKV) and 661 to 700 (GDESVLNCIQCHPFDSVVATSGIDNTIKIWSPTASVPSIV). The S-12-hydroxyfarnesyl cysteine; by FTB/ERA1 moiety is linked to residue Cys754.

As to quaternary structure, interacts with DDB1; the subcellular localization of this complex depends on farnesylation status. Binds to HDA9 in the cytosol when farnesylated. In terms of processing, farnesylated at Cys-754 by FTB/ERA1; this modification triggers an exclusion from the nucleus.

It localises to the nucleus. Its subcellular location is the cytoplasm. The protein resides in the cytosol. The protein operates within protein modification; protein ubiquitination. In terms of biological role, may function as a substrate adapter for CUL4-DDB1 E3 ubiquitin-protein ligase complex. Negative regulator of fatty acid biosynthetic process and accumulation. Acts as an abscisic acid (ABA) negative regulator. Involved in responses to salt (NaCl) and osmotic (e.g. in response to mannitol and PEG) stresses. This Arabidopsis thaliana (Mouse-ear cress) protein is Protein ALTERED SEED GERMINATION 2.